Here is a 370-residue protein sequence, read N- to C-terminus: Protein FAM110B (370 aa).

Disordered stretches follow at residues 127 to 151 (SSEGSSSGSGHKHSSRNWPPHRSEA) and 237 to 256 (KSPEADPVEPACGVSRRPSL). Residues Ser238 and Ser301 each carry the phosphoserine modification. The disordered stretch occupies residues 317 to 337 (DCEQSQDSNSDLRNDDSANDR). The segment covering 326–335 (SDLRNDDSAN) has biased composition (basic and acidic residues).

This sequence belongs to the FAM110 family. Detected in thyroid, spleen and testis, and at lower levels in stomach, spinal cord, lymph node, trachea, adrenal gland, prostate, ovary and intestine.

It localises to the cytoplasm. The protein resides in the cytoskeleton. Its subcellular location is the microtubule organizing center. The protein localises to the centrosome. Functionally, may be involved in tumor progression. The protein is Protein FAM110B (FAM110B) of Homo sapiens (Human).